A 179-amino-acid chain; its full sequence is Acireductone dioxygenase (179 aa).

Positions 88, 90, 94, and 133 each coordinate Fe(2+). Ni(2+) contacts are provided by histidine 88, histidine 90, glutamate 94, and histidine 133.

Belongs to the acireductone dioxygenase (ARD) family. As to quaternary structure, monomer. Interacts with MMP14. Fe(2+) serves as cofactor. Ni(2+) is required as a cofactor.

It localises to the cytoplasm. The protein localises to the nucleus. It is found in the cell membrane. The enzyme catalyses 1,2-dihydroxy-5-(methylsulfanyl)pent-1-en-3-one + O2 = 4-methylsulfanyl-2-oxobutanoate + formate + 2 H(+). It catalyses the reaction 1,2-dihydroxy-5-(methylsulfanyl)pent-1-en-3-one + O2 = 3-(methylsulfanyl)propanoate + CO + formate + 2 H(+). It participates in amino-acid biosynthesis; L-methionine biosynthesis via salvage pathway; L-methionine from S-methyl-5-thio-alpha-D-ribose 1-phosphate: step 5/6. In terms of biological role, catalyzes 2 different reactions between oxygen and the acireductone 1,2-dihydroxy-3-keto-5-methylthiopentene (DHK-MTPene) depending upon the metal bound in the active site. Fe-containing acireductone dioxygenase (Fe-ARD) produces formate and 2-keto-4-methylthiobutyrate (KMTB), the alpha-ketoacid precursor of methionine in the methionine recycle pathway. Ni-containing acireductone dioxygenase (Ni-ARD) produces methylthiopropionate, carbon monoxide and formate, and does not lie on the methionine recycle pathway. This Xenopus laevis (African clawed frog) protein is Acireductone dioxygenase (adi1).